The sequence spans 295 residues: Transcription factor MYB34 (295 aa).

2 HTH myb-type domains span residues 9–61 and 62–116; these read EEGI…ANYL and RPDI…KKRL. DNA-binding regions (H-T-H motif) lie at residues 37–61 and 89–112; these read WRTL…ANYL and WAAI…NTNL.

In terms of assembly, can form complexes with MYC2, MYC3 or MYC4. In terms of tissue distribution, expressed in trichomes.

It localises to the nucleus. Transcription factor involved in tryptophan gene activation and in indole-3-acetic acid (IAA) and indolic glucosinolates (IG) biosynthesis. Acts as a direct transcriptional activator of both Trp synthesis genes and Trp secondary metabolism genes. The protein is Transcription factor MYB34 (MYB34) of Arabidopsis thaliana (Mouse-ear cress).